Here is a 426-residue protein sequence, read N- to C-terminus: Tyrosine-protein phosphatase non-receptor type 20 (426 aa).

Basic residues predominate over residues 1–10 (MSSPRKVRGK). The disordered stretch occupies residues 1 to 58 (MSSPRKVRGKTGRDNDEEEGNSGNLNLRNSLPSSSQKMTPTKPIFGNKMNSENVKPSH). The span at 21 to 35 (NSGNLNLRNSLPSSS) shows a compositional bias: low complexity. S76 carries the phosphoserine modification. Polar residues predominate over residues 95-117 (NSMDSETAGPSKTVSPVLSGSSR). A disordered region spans residues 95-124 (NSMDSETAGPSKTVSPVLSGSSRLSKDTET). Residue S127 is modified to Phosphoserine. The Tyrosine-protein phosphatase domain maps to 165–418 (IIREFLELEQ…QFCYEIVLEV (254 aa)). Substrate-binding positions include D329, 359-365 (CSAGVGR), and Q403. The Phosphocysteine intermediate role is filled by C359.

The protein belongs to the protein-tyrosine phosphatase family. Non-receptor class subfamily. As to expression, testis-specific. Specifically expressed in testicular germ cells that undergo meiosis (at protein level).

It is found in the nucleus. The protein localises to the cytoplasm. The protein resides in the cytoskeleton. It localises to the microtubule organizing center. Its subcellular location is the centrosome. The catalysed reaction is O-phospho-L-tyrosyl-[protein] + H2O = L-tyrosyl-[protein] + phosphate. Its function is as follows. Tyrosine-protein phosphatase targeted to sites of actin polymerization in response of varied extracellular stimuli. Has tyrosine phosphatase activity towards various tyrosyl phosphorylated substrates. In Mus musculus (Mouse), this protein is Tyrosine-protein phosphatase non-receptor type 20 (Ptpn20).